The sequence spans 52 residues: Conotoxin Cal6.36 (52 aa).

Positions 1 to 22 are cleaved as a signal peptide; it reads MKVTCVLTLAVLILTVGQMVTA. 3 disulfides stabilise this stretch: Cys-24-Cys-39, Cys-31-Cys-43, and Cys-38-Cys-47.

As to expression, expressed by the venom duct.

It is found in the secreted. Its function is as follows. Probable neurotoxin. This is Conotoxin Cal6.36 from Californiconus californicus (California cone).